Reading from the N-terminus, the 92-residue chain is Putative defensin-like protein 225 (92 aa).

Positions 1–26 are cleaved as a signal peptide; sequence MKYGVLFMVSCGVMFLILSHVEEVEA. 3 disulfides stabilise this stretch: Cys32-Cys92, Cys42-Cys70, and Cys68-Cys88.

This sequence belongs to the DEFL family.

It is found in the secreted. This chain is Putative defensin-like protein 225 (SCRL1), found in Arabidopsis thaliana (Mouse-ear cress).